We begin with the raw amino-acid sequence, 452 residues long: Cell division protein FtsZ (452 aa).

Residues 24–28 (GAGSN), 111–113 (GTG), Glu-142, Arg-146, and Asp-190 contribute to the GTP site. Residues 432–452 (DQDNKESDIHDIPAFLRKKRD) are disordered. A compositionally biased stretch (basic and acidic residues) spans 433–442 (QDNKESDIHD).

The protein belongs to the FtsZ family. Homodimer. Polymerizes to form a dynamic ring structure in a strictly GTP-dependent manner. Interacts directly with several other division proteins.

It localises to the cytoplasm. Essential cell division protein that forms a contractile ring structure (Z ring) at the future cell division site. The regulation of the ring assembly controls the timing and the location of cell division. One of the functions of the FtsZ ring is to recruit other cell division proteins to the septum to produce a new cell wall between the dividing cells. Binds GTP and shows GTPase activity. This chain is Cell division protein FtsZ, found in Rickettsia conorii (strain ATCC VR-613 / Malish 7).